Reading from the N-terminus, the 151-residue chain is Small ribosomal subunit protein uS15 (151 aa).

The tract at residues Met-1–Thr-20 is disordered.

It belongs to the universal ribosomal protein uS15 family. In terms of assembly, part of the 30S ribosomal subunit.

The chain is Small ribosomal subunit protein uS15 from Methanococcus maripaludis (strain C7 / ATCC BAA-1331).